Reading from the N-terminus, the 775-residue chain is Lon protease (775 aa).

Residues 6 to 207 (LPLMALRDIV…TIINILTSNI (202 aa)) form the Lon N-terminal domain. Residue 356–363 (GPPGVGKT) coordinates ATP. In terms of domain architecture, Lon proteolytic spans 592–773 (NDQIGSTTGL…DQVLEHALTK (182 aa)). Catalysis depends on residues Ser-679 and Lys-722.

The protein belongs to the peptidase S16 family. In terms of assembly, homohexamer. Organized in a ring with a central cavity.

Its subcellular location is the cytoplasm. The catalysed reaction is Hydrolysis of proteins in presence of ATP.. Its function is as follows. ATP-dependent serine protease that mediates the selective degradation of mutant and abnormal proteins as well as certain short-lived regulatory proteins. Required for cellular homeostasis and for survival from DNA damage and developmental changes induced by stress. Degrades polypeptides processively to yield small peptide fragments that are 5 to 10 amino acids long. Binds to DNA in a double-stranded, site-specific manner. This is Lon protease from Rickettsia bellii (strain RML369-C).